The chain runs to 587 residues: Phosphomethylpyrimidine synthase (587 aa).

Residues asparagine 218, methionine 247, tyrosine 276, histidine 312, 332-334, 373-376, and glutamate 412 contribute to the substrate site; these read SRG and DGLR. Histidine 416 serves as a coordination point for Zn(2+). Position 439 (tyrosine 439) interacts with substrate. Histidine 480 serves as a coordination point for Zn(2+). The [4Fe-4S] cluster site is built by cysteine 560, cysteine 563, and cysteine 568.

The protein belongs to the ThiC family. It depends on [4Fe-4S] cluster as a cofactor.

It catalyses the reaction 5-amino-1-(5-phospho-beta-D-ribosyl)imidazole + S-adenosyl-L-methionine = 4-amino-2-methyl-5-(phosphooxymethyl)pyrimidine + CO + 5'-deoxyadenosine + formate + L-methionine + 3 H(+). It participates in cofactor biosynthesis; thiamine diphosphate biosynthesis. Catalyzes the synthesis of the hydroxymethylpyrimidine phosphate (HMP-P) moiety of thiamine from aminoimidazole ribotide (AIR) in a radical S-adenosyl-L-methionine (SAM)-dependent reaction. In Porphyromonas gingivalis (strain ATCC 33277 / DSM 20709 / CIP 103683 / JCM 12257 / NCTC 11834 / 2561), this protein is Phosphomethylpyrimidine synthase.